The sequence spans 94 residues: Defensin-7 (94 aa).

An N-terminal signal peptide occupies residues 1 to 19 (MRTLTLLSAFLLVALQAWA). Cystine bridges form between C65-C93 and C72-C92.

It belongs to the alpha-defensin family.

Its subcellular location is the secreted. In terms of biological role, has antimicrobial activity. This chain is Defensin-7 (DEFA7), found in Pan troglodytes (Chimpanzee).